An 87-amino-acid polypeptide reads, in one-letter code: Large ribosomal subunit protein bL31B (87 aa).

Belongs to the bacterial ribosomal protein bL31 family. Type B subfamily. As to quaternary structure, part of the 50S ribosomal subunit.

In Burkholderia multivorans (strain ATCC 17616 / 249), this protein is Large ribosomal subunit protein bL31B.